We begin with the raw amino-acid sequence, 620 residues long: MAEPVLEDTYLTFSSDFDYIAIAPSPFDNFCNSNSDQVRNSISDLRFLIDDDDSFDDLYFPSENESFCIPPDATKREMSGDFTPASGISGDCVNEDTEKNTNGVLISTSSCYNRESPTDSDFSGTSQSLSFSGQDSAKRKTEIEEDSSDESRRLGKDGFASVIKVGGEEDDEKKKNVRLVRNRESAHLSRQRKKHYVEELEDKVKNMHSTISELSSKMSYFVAENVTLRQQMGTRFSSGPPMVPIVYPWMQYPAYMVKPQGSQVALLPIPRLKPKHSVAKVKKFKKVASFSVFGFLFCMFLFGALVNISYGEYKSNYVTDGVYDQSRGRVLVVDSSRVHCGGDSDQGVGRNVSETENLGPPRNSSEPLVASLFVPRNEKLVKIDGNLIIHSVLASEKARDSETKNEEGKSVLATTTKTLSPALPLPDSTSPRTRDVSKHLYSETGKGLSSSGSDDASNDQLKSTIANGKMQQWFREGVAGPMFSSGMCTEVFQFDVSSNSGAIIPASPHTQQCKNTSDTQKGKKNRRILSGGLPVSDFNLTKEDHNSSSKDKFRETKPGPSMVVSVLVDPREGGNGDIDGMMGGTKPQSRVFIVVLVDGVKYITYSCVLPRPDVPHLMTS.

The Cytoplasmic portion of the chain corresponds to 1-287 (MAEPVLEDTY…VAKVKKFKKV (287 aa)). Over residues 109 to 135 (SSCYNRESPTDSDFSGTSQSLSFSGQD) the composition is skewed to polar residues. The disordered stretch occupies residues 109-155 (SSCYNRESPTDSDFSGTSQSLSFSGQDSAKRKTEIEEDSSDESRRLG). The region spanning 172 to 235 (EKKKNVRLVR…VTLRQQMGTR (64 aa)) is the bZIP domain. The basic motif stretch occupies residues 173-205 (KKKNVRLVRNRESAHLSRQRKKHYVEELEDKVK). The leucine-zipper stretch occupies residues 211 to 218 (ISELSSKM). Residues 288 to 308 (ASFSVFGFLFCMFLFGALVNI) traverse the membrane as a helical segment. Residues 309–620 (SYGEYKSNYV…RPDVPHLMTS (312 aa)) are Lumenal-facing. Disordered stretches follow at residues 343-364 (DSDQGVGRNVSETENLGPPRNS), 398-460 (ARDS…SNDQ), and 505-557 (PASP…RETK). N-linked (GlcNAc...) asparagine glycans are attached at residues N351 and N363. Residues 352-364 (VSETENLGPPRNS) show a composition bias toward polar residues. Composition is skewed to basic and acidic residues over residues 398–409 (ARDSETKNEEGK) and 432–441 (RTRDVSKHLY). Polar residues-rich tracts occupy residues 447 to 460 (GLSSSGSDDASNDQ) and 508 to 519 (PHTQQCKNTSDT). N515 carries N-linked (GlcNAc...) asparagine glycosylation. Residues 526–529 (RRIL) carry the RRIL cleavage motif motif. Residues N539 and N546 are each glycosylated (N-linked (GlcNAc...) asparagine). Positions 540–557 (LTKEDHNSSSKDKFRETK) are enriched in basic and acidic residues.

This sequence belongs to the bZIP family. As to quaternary structure, interacts with BZIP28.

The protein localises to the endoplasmic reticulum membrane. Its subcellular location is the nucleus. Functionally, transcriptional activator involved in stress responses. In Arabidopsis thaliana (Mouse-ear cress), this protein is bZIP transcription factor 49.